A 540-amino-acid chain; its full sequence is 2,3-bisphosphoglycerate-independent phosphoglycerate mutase (540 aa).

Residues Asp24 and Ser74 each coordinate Mn(2+). The active-site Phosphoserine intermediate is the Ser74. Residues His135, 165–166 (RD), Arg197, Arg203, 268–271 (RPDR), and Lys341 contribute to the substrate site. Residues Asp408, His412, Asp449, His450, and His467 each contribute to the Mn(2+) site.

It belongs to the BPG-independent phosphoglycerate mutase family. Monomer. Requires Mn(2+) as cofactor.

It carries out the reaction (2R)-2-phosphoglycerate = (2R)-3-phosphoglycerate. It participates in carbohydrate degradation; glycolysis; pyruvate from D-glyceraldehyde 3-phosphate: step 3/5. Functionally, catalyzes the interconversion of 2-phosphoglycerate and 3-phosphoglycerate. In Prochlorococcus marinus (strain MIT 9303), this protein is 2,3-bisphosphoglycerate-independent phosphoglycerate mutase.